The sequence spans 566 residues: Oxygen-dependent choline dehydrogenase (566 aa).

7 to 36 (DYIICGAGSAGNVLATRLTEDPNVTVLLLE) is a binding site for FAD. The tract at residues 182–204 (YQQEGFGPMDRTVTPKGRRASTA) is disordered. Catalysis depends on H474, which acts as the Proton acceptor.

It belongs to the GMC oxidoreductase family. FAD serves as cofactor.

It catalyses the reaction choline + A = betaine aldehyde + AH2. The catalysed reaction is betaine aldehyde + NAD(+) + H2O = glycine betaine + NADH + 2 H(+). It functions in the pathway amine and polyamine biosynthesis; betaine biosynthesis via choline pathway; betaine aldehyde from choline (cytochrome c reductase route): step 1/1. Functionally, involved in the biosynthesis of the osmoprotectant glycine betaine. Catalyzes the oxidation of choline to betaine aldehyde and betaine aldehyde to glycine betaine at the same rate. The polypeptide is Oxygen-dependent choline dehydrogenase (Burkholderia multivorans (strain ATCC 17616 / 249)).